The following is a 104-amino-acid chain: Growth-regulated protein homolog alpha (104 aa).

The N-terminal stretch at 1-30 (MAPAATAAAPRLLRAAMLFLLLVAAGRRAA) is a signal peptide. 2 disulfide bridges follow: Cys40–Cys66 and Cys42–Cys82.

Belongs to the intercrine alpha (chemokine CxC) family.

The protein resides in the secreted. In Bos taurus (Bovine), this protein is Growth-regulated protein homolog alpha.